Reading from the N-terminus, the 91-residue chain is Non-specific lipid-transfer protein 1 (91 aa).

Disulfide bonds link Cys-3–Cys-50, Cys-13–Cys-27, Cys-28–Cys-73, and Cys-48–Cys-87.

It belongs to the plant LTP family.

In terms of biological role, plant non-specific lipid-transfer proteins transfer phospholipids as well as galactolipids across membranes. May play a role in wax or cutin deposition in the cell walls of expanding epidermal cells and certain secretory tissues. The polypeptide is Non-specific lipid-transfer protein 1 (Prunus armeniaca (Apricot)).